A 207-amino-acid chain; its full sequence is Transcription antitermination protein NusB (207 aa).

Belongs to the NusB family.

Involved in transcription antitermination. Required for transcription of ribosomal RNA (rRNA) genes. Binds specifically to the boxA antiterminator sequence of the ribosomal RNA (rrn) operons. The polypeptide is Transcription antitermination protein NusB (Trichodesmium erythraeum (strain IMS101)).